A 302-amino-acid chain; its full sequence is Recombination-associated protein RdgC (302 aa).

The protein belongs to the RdgC family.

The protein resides in the cytoplasm. It localises to the nucleoid. May be involved in recombination. This is Recombination-associated protein RdgC from Halorhodospira halophila (strain DSM 244 / SL1) (Ectothiorhodospira halophila (strain DSM 244 / SL1)).